The chain runs to 191 residues: Large ribosomal subunit protein uL29m (191 aa).

The protein belongs to the universal ribosomal protein uL29 family. Component of the mitochondrial large ribosomal subunit. Mature mitochondrial ribosomes consist of a small (37S) and a large (54S) subunit. The 37S subunit contains at least 33 different proteins and 1 molecule of RNA (15S). The 54S subunit contains at least 45 different proteins and 1 molecule of RNA (21S).

It localises to the mitochondrion. This Sclerotinia sclerotiorum (strain ATCC 18683 / 1980 / Ss-1) (White mold) protein is Large ribosomal subunit protein uL29m (MRPL4).